Consider the following 276-residue polypeptide: 28 kDa ribonucleoprotein, chloroplastic (276 aa).

Residues 1–57 (MATNGCLISLPPFFTTTKSISSYPFLSTQLKPISLSSSLPTLLSLNKRTTQFPTFVS) constitute a chloroplast transit peptide. RRM domains are found at residues 97–175 (AKLF…KAAP) and 191–269 (YRIY…AAEE).

The protein localises to the plastid. It localises to the chloroplast. In terms of biological role, probably involved in the 3'-end processing of chloroplast mRNA's. The chain is 28 kDa ribonucleoprotein, chloroplastic from Nicotiana sylvestris (Wood tobacco).